The sequence spans 215 residues: Peroxiredoxin 1 (215 aa).

The Thioredoxin domain maps to 2–157 (KLLGEKFPSM…ILRALKALQT (156 aa)). Cysteine 44 (cysteine sulfenic acid (-SOH) intermediate) is an active-site residue. Arginine 120 lines the substrate pocket.

The protein belongs to the peroxiredoxin family. Prx6 subfamily. Homodecamer. Pentamer of dimers that assemble into a ring structure.

The protein localises to the cytoplasm. The catalysed reaction is a hydroperoxide + [thioredoxin]-dithiol = an alcohol + [thioredoxin]-disulfide + H2O. Thiol-specific peroxidase that catalyzes the reduction of hydrogen peroxide and organic hydroperoxides to water and alcohols, respectively. Plays a role in cell protection against oxidative stress by detoxifying peroxides. In Caldanaerobacter subterraneus subsp. tengcongensis (strain DSM 15242 / JCM 11007 / NBRC 100824 / MB4) (Thermoanaerobacter tengcongensis), this protein is Peroxiredoxin 1.